We begin with the raw amino-acid sequence, 436 residues long: Methylenetetrahydrofolate--tRNA-(uracil-5-)-methyltransferase TrmFO (436 aa).

An FAD-binding site is contributed by 8–13; it reads GGGLAG.

The protein belongs to the MnmG family. TrmFO subfamily. Requires FAD as cofactor.

It is found in the cytoplasm. It carries out the reaction uridine(54) in tRNA + (6R)-5,10-methylene-5,6,7,8-tetrahydrofolate + NADH + H(+) = 5-methyluridine(54) in tRNA + (6S)-5,6,7,8-tetrahydrofolate + NAD(+). It catalyses the reaction uridine(54) in tRNA + (6R)-5,10-methylene-5,6,7,8-tetrahydrofolate + NADPH + H(+) = 5-methyluridine(54) in tRNA + (6S)-5,6,7,8-tetrahydrofolate + NADP(+). Catalyzes the folate-dependent formation of 5-methyl-uridine at position 54 (M-5-U54) in all tRNAs. This chain is Methylenetetrahydrofolate--tRNA-(uracil-5-)-methyltransferase TrmFO, found in Syntrophomonas wolfei subsp. wolfei (strain DSM 2245B / Goettingen).